The sequence spans 218 residues: Runt-related transcription factor 2 (218 aa).

The region spanning 67-195 (RGHKFYLEKK…TVDGPREPRR (129 aa)) is the Runt domain. The segment at 122–138 (VMAGNDENYSAELRNAS) is required for interaction with FOXO1. The interval 189–218 (GPREPRRHRQKLDDSKPSLFSDRLSDLGRI) is disordered. K204 participates in a covalent cross-link: Glycyl lysine isopeptide (Lys-Gly) (interchain with G-Cter in SUMO2).

In terms of assembly, heterodimer of an alpha and a beta subunit. The alpha subunit binds DNA as a monomer and through the Runt domain. DNA-binding is increased by heterodimerization. Interacts with XRCC6 (Ku70) and XRCC5 (Ku80). Interacts with CCNB1, KAT6A and KAT6B. Interacts with HIVEP3. Interacts with IFI204. Interaction with SATB2; the interaction results in enhanced DNA binding and transactivation by these transcription factors. Binds to HIPK3. Interacts with FOXO1 (via a C-terminal region); the interaction inhibits RUNX2 transcriptional activity towards BGLAP. Interacts with FOXP3. Interacts with TMEM119. Interacts with OLFM2. Interacts with IPO7; the interaction inhibits RUNX2 nuclear translocation in osteoblasts. Post-translationally, phosphorylated; probably by MAP kinases (MAPK). Phosphorylation by HIPK3 is required for the SPEN/MINT and FGF2 transactivation during osteoblastic differentiation.

The protein resides in the nucleus. It localises to the cytoplasm. Transcription factor involved in osteoblastic differentiation and skeletal morphogenesis. Essential for the maturation of osteoblasts and both intramembranous and endochondral ossification. CBF binds to the core site, 5'-PYGPYGGT-3', of a number of enhancers and promoters, including murine leukemia virus, polyomavirus enhancer, T-cell receptor enhancers, osteocalcin, osteopontin, bone sialoprotein, alpha 1(I) collagen, LCK, IL-3 and GM-CSF promoters. Inhibits KAT6B-dependent transcriptional activation. In osteoblasts, supports transcription activation: synergizes with SPEN/MINT to enhance FGFR2-mediated activation of the osteocalcin FGF-responsive element (OCFRE). This is Runt-related transcription factor 2 (Runx2) from Rattus norvegicus (Rat).